The primary structure comprises 109 residues: EPIDERMAL PATTERNING FACTOR-like protein 4 (109 aa).

An N-terminal signal peptide occupies residues 1–26 (MGTFRRRRRFLLAALVTFALLHLFSA). Cystine bridges form between cysteine 66/cysteine 100, cysteine 70/cysteine 76, and cysteine 73/cysteine 102.

This sequence belongs to the plant cysteine rich small secretory peptide family. Epidermal patterning factor subfamily. In terms of assembly, interacts with ERECTA. Expressed at the base of the apical meristem at 3 days after germination. Not detected in the hypocotyl. Expressed in developing stems soon after bolting, in inflorescence stems and in young siliques.

It is found in the secreted. Acts primarily as positive regulator of inflorescence growth. Endodermal expression is sufficient for proper inflorescence architecture. Redundantly involved with EPFL6 in procambial development regulation. Controls stomatal patterning. Mediates stomatal development inhibition. TMM (AC Q9SSD1) functions to dampen or block CLL2 signaling. Acts as a growth-regulatory ligand for ERECTA family receptors. In Arabidopsis thaliana (Mouse-ear cress), this protein is EPIDERMAL PATTERNING FACTOR-like protein 4.